The following is a 236-amino-acid chain: DNA repair protein RecO (236 aa).

The protein belongs to the RecO family.

In terms of biological role, involved in DNA repair and RecF pathway recombination. The chain is DNA repair protein RecO from Haemophilus influenzae (strain 86-028NP).